Consider the following 85-residue polypeptide: Cell division topological specificity factor (85 aa).

Belongs to the MinE family.

Prevents the cell division inhibition by proteins MinC and MinD at internal division sites while permitting inhibition at polar sites. This ensures cell division at the proper site by restricting the formation of a division septum at the midpoint of the long axis of the cell. This is Cell division topological specificity factor from Xylella fastidiosa (strain M12).